Reading from the N-terminus, the 494-residue chain is Folate-biopterin transporter (494 aa).

The next 12 helical transmembrane spans lie at 31–51 (APSW…VLGL), 64–84 (LGLS…PWIL), 104–124 (SYLW…AAWV), 133–153 (VLLF…SLVV), 170–190 (LTWG…GALL), 197–217 (TVFA…FLIS), 246–266 (ILLP…ESAF), 284–303 (VRLV…QRFL), 310–330 (VIMG…LILI), 346–366 (LGDS…VLVL), 375–395 (IEAT…VLSF), and 415–435 (LALL…FLGL). The tract at residues 441-461 (PQVKDKTEKEDNPDDPGDRLV) is disordered.

Belongs to the major facilitator superfamily. Folate-biopterin transporter (TC 2.A.71) family.

It localises to the cell membrane. Mediates folate monoglutamate transport involved in tetrahydrofolate biosynthesis. It also mediates transport of antifolates, such as methotrexate and aminopterin. The polypeptide is Folate-biopterin transporter (Synechocystis sp. (strain ATCC 27184 / PCC 6803 / Kazusa)).